The sequence spans 121 residues: MRNWRWLLLVLAVLLAWLQYRFWFGPGNSGEVMMLEAQVAHQTQDNEGLRQRNQALAAEVKDLKDGEAAIEERARSELGMIKPGETFYRVVEDAPLPAPASPETAAPAQQAPASTDPVDHP.

Residues 1–6 lie on the Cytoplasmic side of the membrane; the sequence is MRNWRW. The helical transmembrane segment at 7–24 threads the bilayer; it reads LLLVLAVLLAWLQYRFWF. Residues 25-121 are Periplasmic-facing; that stretch reads GPGNSGEVMM…PASTDPVDHP (97 aa). Residues 31–66 are a coiled coil; sequence EVMMLEAQVAHQTQDNEGLRQRNQALAAEVKDLKDG. Residues 94–121 form a disordered region; it reads APLPAPASPETAAPAQQAPASTDPVDHP. The span at 101–121 shows a compositional bias: low complexity; it reads SPETAAPAQQAPASTDPVDHP.

It belongs to the FtsB family. As to quaternary structure, part of a complex composed of FtsB, FtsL and FtsQ.

Its subcellular location is the cell inner membrane. Its function is as follows. Essential cell division protein. May link together the upstream cell division proteins, which are predominantly cytoplasmic, with the downstream cell division proteins, which are predominantly periplasmic. In Xanthomonas oryzae pv. oryzae (strain MAFF 311018), this protein is Cell division protein FtsB.